The following is a 351-amino-acid chain: Ribonucleoside-diphosphate reductase subunit M2 B (351 aa).

Residues 1–31 form a disordered region; sequence MGDPERPEAAGLDQDERSSSDTNENEIKSNE. The Fe cation site is built by Asp-100, Glu-131, and His-134. Tyr-138 is a catalytic residue. Positions 194, 228, and 231 each coordinate Fe cation.

This sequence belongs to the ribonucleoside diphosphate reductase small chain family. Heterotetramer with large (RRM1) subunit. Interacts with p53/TP53. Interacts with RRM1 in response to DNA damage. It depends on Fe cation as a cofactor.

The protein resides in the cytoplasm. Its subcellular location is the nucleus. It carries out the reaction a 2'-deoxyribonucleoside 5'-diphosphate + [thioredoxin]-disulfide + H2O = a ribonucleoside 5'-diphosphate + [thioredoxin]-dithiol. In terms of biological role, plays a pivotal role in cell survival by repairing damaged DNA in a p53/TP53-dependent manner. Supplies deoxyribonucleotides for DNA repair in cells arrested at G1 or G2. Contains an iron-tyrosyl free radical center required for catalysis. Forms an active ribonucleotide reductase (RNR) complex with RRM1 which is expressed both in resting and proliferating cells in response to DNA damage. The polypeptide is Ribonucleoside-diphosphate reductase subunit M2 B (RRM2B) (Pongo abelii (Sumatran orangutan)).